Here is a 558-residue protein sequence, read N- to C-terminus: Alkaline/neutral invertase CINV2 (558 aa).

A phosphoserine mark is found at S16, S19, and S50. T79 bears the Phosphothreonine mark. S555 carries the phosphoserine modification.

This sequence belongs to the glycosyl hydrolase 100 family.

The protein resides in the cytoplasm. It localises to the cytosol. The catalysed reaction is Hydrolysis of terminal non-reducing beta-D-fructofuranoside residues in beta-D-fructofuranosides.. Cytosolic invertase that may cleave sucrose into glucose and fructose, and that is involved in the regulation of root growth. May regulate sugar-mediated root development by controlling sucrose catabolism in root cells. The sequence is that of Alkaline/neutral invertase CINV2 from Arabidopsis thaliana (Mouse-ear cress).